Here is a 329-residue protein sequence, read N- to C-terminus: Sex comb on midleg-like protein 1 (329 aa).

Phosphoserine is present on residues S138 and S238. Residues 258-325 (WSVEAVVLFL…YYIDRLKQGK (68 aa)) enclose the SAM domain.

This sequence belongs to the SCM family.

The protein resides in the nucleus. Functionally, putative Polycomb group (PcG) protein. PcG proteins act by forming multiprotein complexes, which are required to maintain the transcriptionally repressive state of homeotic genes throughout development. May be involved in spermatogenesis during sexual maturation. In Nomascus leucogenys (Northern white-cheeked gibbon), this protein is Sex comb on midleg-like protein 1 (SCML1).